The chain runs to 452 residues: Aspartyl/glutamyl-tRNA(Asn/Gln) amidotransferase subunit B (452 aa).

It belongs to the GatB/GatE family. GatB subfamily. In terms of assembly, heterotrimer of A, B and C subunits.

The catalysed reaction is L-glutamyl-tRNA(Gln) + L-glutamine + ATP + H2O = L-glutaminyl-tRNA(Gln) + L-glutamate + ADP + phosphate + H(+). The enzyme catalyses L-aspartyl-tRNA(Asn) + L-glutamine + ATP + H2O = L-asparaginyl-tRNA(Asn) + L-glutamate + ADP + phosphate + 2 H(+). Functionally, allows the formation of correctly charged Asn-tRNA(Asn) or Gln-tRNA(Gln) through the transamidation of misacylated Asp-tRNA(Asn) or Glu-tRNA(Gln) in organisms which lack either or both of asparaginyl-tRNA or glutaminyl-tRNA synthetases. The reaction takes place in the presence of glutamine and ATP through an activated phospho-Asp-tRNA(Asn) or phospho-Glu-tRNA(Gln). The chain is Aspartyl/glutamyl-tRNA(Asn/Gln) amidotransferase subunit B from Methanosphaera stadtmanae (strain ATCC 43021 / DSM 3091 / JCM 11832 / MCB-3).